The sequence spans 212 residues: 2',3'-cyclic-nucleotide 3'-phosphodiesterase (212 aa).

Histidine 51 acts as the Proton donor/acceptor in catalysis. Residue threonine 53 coordinates substrate. The active-site Proton donor/acceptor is the histidine 146. Residues serine 148 and tyrosine 151 each coordinate substrate.

It belongs to the 2H phosphoesterase superfamily. CPD1 family.

The protein resides in the golgi apparatus. It catalyses the reaction a nucleoside 2',3'-cyclic phosphate + H2O = a nucleoside 2'-phosphate + H(+). Functionally, involved in the metabolism of ADP-ribose 1',2'-cyclic phosphate which is produced as a consequence of tRNA splicing. In Neurospora crassa (strain ATCC 24698 / 74-OR23-1A / CBS 708.71 / DSM 1257 / FGSC 987), this protein is 2',3'-cyclic-nucleotide 3'-phosphodiesterase (cpd-7).